The sequence spans 84 residues: Small ribosomal subunit protein uS17 (84 aa).

Belongs to the universal ribosomal protein uS17 family. In terms of assembly, part of the 30S ribosomal subunit.

In terms of biological role, one of the primary rRNA binding proteins, it binds specifically to the 5'-end of 16S ribosomal RNA. The polypeptide is Small ribosomal subunit protein uS17 (Clostridioides difficile (strain 630) (Peptoclostridium difficile)).